The chain runs to 183 residues: ESX-1 secretion-associated protein EspH (183 aa).

The span at 1–16 shows a compositional bias: acidic residues; sequence MVDPPGNDDDHGDLDA. The tract at residues 1–32 is disordered; sequence MVDPPGNDDDHGDLDALDFSAAHTNEASPLDA.

In Mycobacterium tuberculosis (strain ATCC 25618 / H37Rv), this protein is ESX-1 secretion-associated protein EspH.